The sequence spans 291 residues: Transmembrane protein 41B (291 aa).

Residues 1–38 (MAKGRVAERSQMGADHTTPVGDGAAGTRGPAAPGSRDY) form a disordered region. The residue at position 18 (Thr-18) is a Phosphothreonine. A compositionally biased stretch (low complexity) spans 21-34 (GDGAAGTRGPAAPG). The residue at position 35 (Ser-35) is a Phosphoserine. Transmembrane regions (helical) follow at residues 52–72 (MSLL…FLVY), 109–129 (FYVQ…TFAI), 147–169 (LALF…LSYL), 197–217 (LINY…FINI), 225–245 (PLKV…FVAI), and 262–282 (SWNS…PAIF). Residues 140 to 251 (GFLYPFPLAL…FVAIKAGTTL (112 aa)) form a VTT domain; required for its function in autophagy region.

It belongs to the TMEM41 family. As to quaternary structure, interacts with VMP1. Interacts with COPA, COPB1, VDAC1 and ERLIN2. Interacts with ATG2A. Interacts with SURF4.

The protein localises to the endoplasmic reticulum membrane. The protein resides in the endomembrane system. It catalyses the reaction a 1,2-diacyl-sn-glycero-3-phospho-L-serine(in) = a 1,2-diacyl-sn-glycero-3-phospho-L-serine(out). The catalysed reaction is cholesterol(in) = cholesterol(out). The enzyme catalyses a 1,2-diacyl-sn-glycero-3-phosphocholine(in) = a 1,2-diacyl-sn-glycero-3-phosphocholine(out). It carries out the reaction a 1,2-diacyl-sn-glycero-3-phosphoethanolamine(in) = a 1,2-diacyl-sn-glycero-3-phosphoethanolamine(out). Its function is as follows. Phospholipid scramblase involved in lipid homeostasis and membrane dynamics processes. Has phospholipid scramblase activity toward cholesterol and phosphatidylserine, as well as phosphatidylethanolamine and phosphatidylcholine. Required for autophagosome formation: participates in early stages of autophagosome biogenesis at the endoplasmic reticulum (ER) membrane by reequilibrating the leaflets of the ER as lipids are extracted by ATG2 (ATG2A or ATG2B) to mediate autophagosome assembly. In addition to autophagy, involved in other processes in which phospholipid scramblase activity is required. Required for normal motor neuron development. This chain is Transmembrane protein 41B, found in Pongo abelii (Sumatran orangutan).